The chain runs to 485 residues: Cysteine--tRNA ligase (485 aa).

A Zn(2+)-binding site is contributed by Cys-28. The short motif at 30–40 is the 'HIGH' region element; the sequence is MTVYDLCHVGH. The Zn(2+) site is built by Cys-209, His-234, and Glu-238. The 'KMSKS' region signature appears at 266-270; that stretch reads KMSKS. Lys-269 contacts ATP.

The protein belongs to the class-I aminoacyl-tRNA synthetase family. As to quaternary structure, monomer. It depends on Zn(2+) as a cofactor.

It localises to the cytoplasm. It carries out the reaction tRNA(Cys) + L-cysteine + ATP = L-cysteinyl-tRNA(Cys) + AMP + diphosphate. The sequence is that of Cysteine--tRNA ligase from Nitrosococcus oceani (strain ATCC 19707 / BCRC 17464 / JCM 30415 / NCIMB 11848 / C-107).